The following is a 213-amino-acid chain: Pyrrolidone-carboxylate peptidase (213 aa).

Catalysis depends on residues Glu-78, Cys-141, and His-165.

It belongs to the peptidase C15 family. Homotetramer.

The protein resides in the cytoplasm. The catalysed reaction is Release of an N-terminal pyroglutamyl group from a polypeptide, the second amino acid generally not being Pro.. Functionally, removes 5-oxoproline from various penultimate amino acid residues except L-proline. The polypeptide is Pyrrolidone-carboxylate peptidase (Enterococcus faecalis (strain ATCC 700802 / V583)).